A 226-amino-acid polypeptide reads, in one-letter code: Biosynthetic peptidoglycan transglycosylase (226 aa).

A helical transmembrane segment spans residues 5–25 (IGVTVLAVVGLLLLPYLLTPL).

It belongs to the glycosyltransferase 51 family.

It localises to the cell inner membrane. It carries out the reaction [GlcNAc-(1-&gt;4)-Mur2Ac(oyl-L-Ala-gamma-D-Glu-L-Lys-D-Ala-D-Ala)](n)-di-trans,octa-cis-undecaprenyl diphosphate + beta-D-GlcNAc-(1-&gt;4)-Mur2Ac(oyl-L-Ala-gamma-D-Glu-L-Lys-D-Ala-D-Ala)-di-trans,octa-cis-undecaprenyl diphosphate = [GlcNAc-(1-&gt;4)-Mur2Ac(oyl-L-Ala-gamma-D-Glu-L-Lys-D-Ala-D-Ala)](n+1)-di-trans,octa-cis-undecaprenyl diphosphate + di-trans,octa-cis-undecaprenyl diphosphate + H(+). It functions in the pathway cell wall biogenesis; peptidoglycan biosynthesis. Peptidoglycan polymerase that catalyzes glycan chain elongation from lipid-linked precursors. The chain is Biosynthetic peptidoglycan transglycosylase from Nitrobacter hamburgensis (strain DSM 10229 / NCIMB 13809 / X14).